Here is a 200-residue protein sequence, read N- to C-terminus: NADH-quinone oxidoreductase subunit I 1 (200 aa).

2 consecutive 4Fe-4S ferredoxin-type domains span residues 52–82 (LNRH…VEGA) and 98–127 (RVYQ…MTNE). 8 residues coordinate [4Fe-4S] cluster: Cys62, Cys65, Cys68, Cys72, Cys107, Cys110, Cys113, and Cys117. Residues 181–200 (TERQVAVSKGEKPQDEGVEA) are disordered. Positions 189 to 200 (KGEKPQDEGVEA) are enriched in basic and acidic residues.

Belongs to the complex I 23 kDa subunit family. As to quaternary structure, NDH-1 is composed of 14 different subunits. Subunits NuoA, H, J, K, L, M, N constitute the membrane sector of the complex. [4Fe-4S] cluster serves as cofactor.

It localises to the cell membrane. The enzyme catalyses a quinone + NADH + 5 H(+)(in) = a quinol + NAD(+) + 4 H(+)(out). In terms of biological role, NDH-1 shuttles electrons from NADH, via FMN and iron-sulfur (Fe-S) centers, to quinones in the respiratory chain. The immediate electron acceptor for the enzyme in this species is believed to be ubiquinone. Couples the redox reaction to proton translocation (for every two electrons transferred, four hydrogen ions are translocated across the cytoplasmic membrane), and thus conserves the redox energy in a proton gradient. The polypeptide is NADH-quinone oxidoreductase subunit I 1 (Streptomyces avermitilis (strain ATCC 31267 / DSM 46492 / JCM 5070 / NBRC 14893 / NCIMB 12804 / NRRL 8165 / MA-4680)).